The following is a 349-amino-acid chain: RxLR effector protein CRE15 (349 aa).

The N-terminal stretch at 1 to 33 (MITFKRLSSARWGALLTSIAVLFFLAITKGADA) is a signal peptide. Positions 46 to 62 (RRLRTTTADAYYASEDR) match the RxLR-dEER motif.

It belongs to the RxLR effector family. In terms of assembly, interacts directly with the potato ortholog of vascular highway 1 (VH1)-interacting kinase (VIK), encoding a predicted MEK kinase (MAP3K).

The protein localises to the secreted. The protein resides in the host cell membrane. Effector that promotes P.infestans virulence in Nicotiana benthamiana and potato. Attenuates cell death triggered by the pathogen-associated molecular pattern infestin 1 (INF1), indicating that the effector suppresses pattern-triggered immunity. However, it does not attenuate cell death triggered by a range of resistance proteins, suggesting that it specifically suppresses INF1-triggered cell death (ICD). Targets host MAP3K VIK in order to utilize or promote its ability to negatively regulate immunity. The polypeptide is RxLR effector protein CRE15 (Phytophthora infestans (strain T30-4) (Potato late blight agent)).